A 100-amino-acid polypeptide reads, in one-letter code: Small ribosomal subunit protein bS18 (100 aa).

Residues 1 to 23 (MTFIRKPAGQAKPQKYSTDAYGR) form a disordered region.

The protein belongs to the bacterial ribosomal protein bS18 family. As to quaternary structure, part of the 30S ribosomal subunit. Forms a tight heterodimer with protein bS6.

In terms of biological role, binds as a heterodimer with protein bS6 to the central domain of the 16S rRNA, where it helps stabilize the platform of the 30S subunit. This is Small ribosomal subunit protein bS18 from Endomicrobium trichonymphae.